Reading from the N-terminus, the 77-residue chain is Conotoxin Vc1 (77 aa).

Residues Met-1–Ala-22 form the signal peptide. 2 propeptides span residues His-23–Arg-58 and Arg-73–Tyr-77.

Belongs to the conotoxin H superfamily. In terms of tissue distribution, expressed by the venom duct.

The protein localises to the secreted. Its function is as follows. Probable toxin. The protein is Conotoxin Vc1 of Conus victoriae (Queen Victoria cone).